The following is a 185-amino-acid chain: Elongation factor P (185 aa).

It belongs to the elongation factor P family.

The protein resides in the cytoplasm. The protein operates within protein biosynthesis; polypeptide chain elongation. Functionally, involved in peptide bond synthesis. Stimulates efficient translation and peptide-bond synthesis on native or reconstituted 70S ribosomes in vitro. Probably functions indirectly by altering the affinity of the ribosome for aminoacyl-tRNA, thus increasing their reactivity as acceptors for peptidyl transferase. This is Elongation factor P from Streptococcus uberis (strain ATCC BAA-854 / 0140J).